A 230-amino-acid chain; its full sequence is Prolactin-3D1 (230 aa).

The N-terminal stretch at 1 to 29 (MQLTLTLSRASGMQLFLLVSSLLLWEKVA) is a signal peptide. Disulfide bonds link Cys-81–Cys-200 and Cys-217–Cys-225. N-linked (GlcNAc...) asparagine glycosylation is found at Asn-109 and Asn-158.

This sequence belongs to the somatotropin/prolactin family.

The protein localises to the secreted. This Rattus norvegicus (Rat) protein is Prolactin-3D1 (Prl3d1).